The following is a 367-amino-acid chain: MTSRNYLLLTPGPLTTSRTVKEAMLFDSCTWDDDYNIGVVEQIRQQLTEMATASEGYTSVLLQGSGSYAVEAVLGSALGPQDKVLIVSNGAYGARMVEMAGLMGIAHHAYDCGEVARPDVQAIDAILNADPTISHIAMVHSETTTGMLNPIDEVGTLAHRYGKTYIVDAMSSFGGIPMDIAALHIDYLISSANKCIQGVPGFAFVIAREQKLAACKGRSRSLSLDLYAQWRCMEDNHGKWRFTSPTHTVLAFAQALKELAKEGGVAARHQRYQQNQRSLVAGMRALGFNTLLDDELHSPIITAFYSPEDPQYRFSEFYRRLKEQGFVIYPGKVSQSDCFRIGNIGEVYAADITALLTAIRTAMYWTK.

Lys194 is modified (N6-(pyridoxal phosphate)lysine).

It belongs to the class-V pyridoxal-phosphate-dependent aminotransferase family. PhnW subfamily. In terms of assembly, homodimer. Pyridoxal 5'-phosphate serves as cofactor.

It catalyses the reaction (2-aminoethyl)phosphonate + pyruvate = phosphonoacetaldehyde + L-alanine. Involved in phosphonate degradation. The polypeptide is 2-aminoethylphosphonate--pyruvate transaminase (Salmonella gallinarum (strain 287/91 / NCTC 13346)).